A 145-amino-acid chain; its full sequence is 3-hydroxyacyl-[acyl-carrier-protein] dehydratase FabZ (145 aa).

H49 is an active-site residue.

This sequence belongs to the thioester dehydratase family. FabZ subfamily.

The protein resides in the cytoplasm. It carries out the reaction a (3R)-hydroxyacyl-[ACP] = a (2E)-enoyl-[ACP] + H2O. Functionally, involved in unsaturated fatty acids biosynthesis. Catalyzes the dehydration of short chain beta-hydroxyacyl-ACPs and long chain saturated and unsaturated beta-hydroxyacyl-ACPs. This is 3-hydroxyacyl-[acyl-carrier-protein] dehydratase FabZ from Ehrlichia ruminantium (strain Gardel).